The sequence spans 569 residues: Sugar transporter STL1 (569 aa).

Topologically, residues 1 to 29 (MKDLKLSNFKGKFISRTSHWGLTGKKLRY) are cytoplasmic. A helical transmembrane segment spans residues 30 to 50 (FITIASMTGFSLFGYDQGLMA). Over 51 to 79 (SLITGKQFNYEFPATKENGDHDRHATVVQ) the chain is Extracellular. The helical transmembrane segment at 80-100 (GATTSCYELGCFAGSLFVMFC) threads the bilayer. The Cytoplasmic portion of the chain corresponds to 101–107 (GERIGRK). The helical transmembrane segment at 108–128 (PLILMGSVITIIGAVISTCAF) threads the bilayer. Residue arginine 129 is a topological domain, extracellular. Residues 130 to 150 (GYWALGQFIIGRVVTGVGTGL) form a helical membrane-spanning segment. At 151–168 (NTSTIPVWQSEMSKAENR) the chain is on the cytoplasmic side. Residues 169-189 (GLLVNLEGSTIAFGTMIAYWI) form a helical membrane-spanning segment. Topologically, residues 190–203 (DFGLSYTNSSVQWR) are extracellular. A glycan (N-linked (GlcNAc...) asparagine) is linked at asparagine 197. Residues 204–224 (FPVSMQIVFALFLLAFMIKLP) traverse the membrane as a helical segment. Topologically, residues 225–291 (ESPRWLISQS…SRGRSQNLQR (67 aa)) are cytoplasmic. A helical membrane pass occupies residues 292-312 (ALIAASTQFFQQFTGCNAAIY). The Extracellular portion of the chain corresponds to 313 to 330 (YSTVLFNKTIKLDYRLSM). Asparagine 319 carries an N-linked (GlcNAc...) asparagine glycan. A helical transmembrane segment spans residues 331–351 (IIGGVFATIYALSTIGSFFLI). Residues 352–358 (EKLGRRK) are Cytoplasmic-facing. Residues 359 to 379 (LFLLGATGQAVSFTITFACLV) traverse the membrane as a helical segment. Residues 380–389 (KENKENARGA) lie on the Extracellular side of the membrane. Residues 390-410 (AVGLFLFITFFGLSLLSLPWI) traverse the membrane as a helical segment. Over 411–426 (YPPEIASMKVRASTNA) the chain is Cytoplasmic. A helical membrane pass occupies residues 427–447 (FSTCTNWLCNFAVVMFTPIFI). Residues 448–453 (GQSGWG) are Extracellular-facing. The chain crosses the membrane as a helical span at residues 454 to 474 (CYLFFAVMNYLYIPVIFFFYP). Residues 475–569 (ETAGRSLEEI…TVNDKANFEG (95 aa)) are Cytoplasmic-facing. Acidic residues predominate over residues 524–533 (DDEMEKEDFG). The disordered stretch occupies residues 524 to 569 (DDEMEKEDFGEDRVEDTYNQINGDNSSSSSNIKNEDTVNDKANFEG). Residues 556-569 (KNEDTVNDKANFEG) show a composition bias toward basic and acidic residues.

This sequence belongs to the major facilitator superfamily. Sugar transporter (TC 2.A.1.1) family.

The protein resides in the membrane. This Saccharomyces cerevisiae (strain ATCC 204508 / S288c) (Baker's yeast) protein is Sugar transporter STL1 (STL1).